A 735-amino-acid polypeptide reads, in one-letter code: Nuclear intron maturase 2, mitochondrial (735 aa).

The transit peptide at 1–12 (MRRSFSVLGPYK) directs the protein to the mitochondrion. The Reverse transcriptase domain maps to 161-460 (RDKTDYESLS…KGIMFLDHVL (300 aa)). The tract at residues 485-653 (GTLLSVTASL…KFLIEYLTLD (169 aa)) is intron maturase type-2. The disordered stretch occupies residues 707-735 (SSTYNRDNDDQKNKEEDEDSEDGLRIARM). Basic and acidic residues predominate over residues 712–721 (RDNDDQKNKE).

It belongs to the plant nuclear intron maturase (nMat) family. Associated to a large ribonucleoprotein complex in mitochondria containing group-II intron RNAs.

The protein resides in the mitochondrion. Nuclear-encoded maturase required for splicing of group-II introns in mitochondria. Involved in the splicing of mitochondrial COX2, NAD1 and NAD7 transcripts. Necessary for mitochondrial biogenesis during early developmental stages. This chain is Nuclear intron maturase 2, mitochondrial, found in Arabidopsis thaliana (Mouse-ear cress).